Reading from the N-terminus, the 199-residue chain is Probable molybdenum cofactor guanylyltransferase (199 aa).

GTP contacts are provided by residues 8-10 (LAG), Lys-20, Asp-65, and Asp-96. Asp-96 is a Mg(2+) binding site.

The protein belongs to the MobA family. Mg(2+) serves as cofactor.

The protein resides in the cytoplasm. The enzyme catalyses Mo-molybdopterin + GTP + H(+) = Mo-molybdopterin guanine dinucleotide + diphosphate. In terms of biological role, transfers a GMP moiety from GTP to Mo-molybdopterin (Mo-MPT) cofactor (Moco or molybdenum cofactor) to form Mo-molybdopterin guanine dinucleotide (Mo-MGD) cofactor. This is Probable molybdenum cofactor guanylyltransferase from Bacillus subtilis (strain 168).